A 226-amino-acid polypeptide reads, in one-letter code: 2-C-methyl-D-erythritol 4-phosphate cytidylyltransferase (226 aa).

Belongs to the IspD/TarI cytidylyltransferase family. IspD subfamily.

The catalysed reaction is 2-C-methyl-D-erythritol 4-phosphate + CTP + H(+) = 4-CDP-2-C-methyl-D-erythritol + diphosphate. It participates in isoprenoid biosynthesis; isopentenyl diphosphate biosynthesis via DXP pathway; isopentenyl diphosphate from 1-deoxy-D-xylulose 5-phosphate: step 2/6. In terms of biological role, catalyzes the formation of 4-diphosphocytidyl-2-C-methyl-D-erythritol from CTP and 2-C-methyl-D-erythritol 4-phosphate (MEP). The sequence is that of 2-C-methyl-D-erythritol 4-phosphate cytidylyltransferase from Bacillus cereus (strain ATCC 10987 / NRS 248).